A 531-amino-acid chain; its full sequence is 2-isopropylmalate synthase (531 aa).

The 277-residue stretch at 8–284 (IIIFDTTLRD…LTNIDTKQIY (277 aa)) folds into the Pyruvate carboxyltransferase domain. Residues Asp17, His208, His210, and Asn244 each coordinate Mn(2+). The segment at 408–531 (RVELVQVSCG…TQDKQTEVTA (124 aa)) is regulatory domain.

The protein belongs to the alpha-IPM synthase/homocitrate synthase family. LeuA type 1 subfamily. Homodimer. It depends on Mn(2+) as a cofactor.

Its subcellular location is the cytoplasm. It catalyses the reaction 3-methyl-2-oxobutanoate + acetyl-CoA + H2O = (2S)-2-isopropylmalate + CoA + H(+). The protein operates within amino-acid biosynthesis; L-leucine biosynthesis; L-leucine from 3-methyl-2-oxobutanoate: step 1/4. Its function is as follows. Catalyzes the condensation of the acetyl group of acetyl-CoA with 3-methyl-2-oxobutanoate (2-ketoisovalerate) to form 3-carboxy-3-hydroxy-4-methylpentanoate (2-isopropylmalate). The sequence is that of 2-isopropylmalate synthase from Nostoc sp. (strain PCC 7120 / SAG 25.82 / UTEX 2576).